The primary structure comprises 600 residues: MLRTHLSGELRKENAGQSVTLTGWVARRRDHGGVIFIDLRDRSGIAQVVFRNEDVAERAHALRSEFVLQVTGVVEKRPEGSENPNLASGDVEVSVTDFTVLNESAPLPFQIEDASSAGEVGEETRLKYRYLDLRRPVQANALRLRSAANKAARTVLDSHDFTEIETPTLTRSTPEGARDFLVPARLKPGTFYALPQSPQLFKQLLQVAGMERYYQIARCYRDEDFRADRQPEFTQLDVEMSFVDQEDVIALAEEILTEVWKLIGYEISTPIPRITYADAMRLYGSDKPDLRFDIQITECTDFFADTTFRVFKNEYVGAVVMKGGASQPRRQLDAWQEWAKQRGAKGLAYILVGEDGELGGPVAKNITDAEREGIAAHVGAEPGDCIFFAAGDTRSSRALLGAARDEIARKLDLIRDGEWSFVWVVDAPMFESAADATASGDVALGNSKWTAVHHAFTSPKPEFLDTFDENPGEALAYAYDIVCNGNEIGGGSIRIHQRDVQERVFKVMGISEEEARDKFGFLLDAFAFGAPPHGGIAFGWDRIVSLLGGFDSIRDVIAFPKSGGGVDPLTDAPAPITPLQRKESGIDAKPKAAENKPEEK.

E175 is an L-aspartate binding site. The aspartate stretch occupies residues 199–202 (QLFK). L-aspartate is bound at residue R221. ATP-binding positions include 221-223 (RDE) and Q230. Residue H453 participates in L-aspartate binding. E487 is a binding site for ATP. Residue R494 participates in L-aspartate binding. An ATP-binding site is contributed by 539 to 542 (GWDR). Residues 564 to 600 (GGVDPLTDAPAPITPLQRKESGIDAKPKAAENKPEEK) are disordered. The span at 580–600 (QRKESGIDAKPKAAENKPEEK) shows a compositional bias: basic and acidic residues.

It belongs to the class-II aminoacyl-tRNA synthetase family. Type 1 subfamily. Homodimer.

It is found in the cytoplasm. It carries out the reaction tRNA(Asx) + L-aspartate + ATP = L-aspartyl-tRNA(Asx) + AMP + diphosphate. Functionally, aspartyl-tRNA synthetase with relaxed tRNA specificity since it is able to aspartylate not only its cognate tRNA(Asp) but also tRNA(Asn). Reaction proceeds in two steps: L-aspartate is first activated by ATP to form Asp-AMP and then transferred to the acceptor end of tRNA(Asp/Asn). This Corynebacterium efficiens (strain DSM 44549 / YS-314 / AJ 12310 / JCM 11189 / NBRC 100395) protein is Aspartate--tRNA(Asp/Asn) ligase.